A 213-amino-acid polypeptide reads, in one-letter code: Ribosome maturation factor RimM (213 aa).

The PRC barrel domain occupies 99–175; sequence DQDAAYISDL…RITMRLPEGL (77 aa). The disordered stretch occupies residues 182 to 213; the sequence is TATAREPRARRTRKRGLRKPITGADATPPDSQ. Residues 189 to 199 show a composition bias toward basic residues; the sequence is RARRTRKRGLR.

Belongs to the RimM family. As to quaternary structure, binds ribosomal protein uS19.

The protein localises to the cytoplasm. In terms of biological role, an accessory protein needed during the final step in the assembly of 30S ribosomal subunit, possibly for assembly of the head region. Essential for efficient processing of 16S rRNA. May be needed both before and after RbfA during the maturation of 16S rRNA. It has affinity for free ribosomal 30S subunits but not for 70S ribosomes. The sequence is that of Ribosome maturation factor RimM from Acidobacterium capsulatum (strain ATCC 51196 / DSM 11244 / BCRC 80197 / JCM 7670 / NBRC 15755 / NCIMB 13165 / 161).